Reading from the N-terminus, the 208-residue chain is Small ribosomal subunit protein uS4 (208 aa).

In terms of domain architecture, S4 RNA-binding spans 97–160; the sequence is TRLDNVCYRM…QKQLRVQEAL (64 aa).

Belongs to the universal ribosomal protein uS4 family. In terms of assembly, part of the 30S ribosomal subunit. Contacts protein S5. The interaction surface between S4 and S5 is involved in control of translational fidelity.

In terms of biological role, one of the primary rRNA binding proteins, it binds directly to 16S rRNA where it nucleates assembly of the body of the 30S subunit. With S5 and S12 plays an important role in translational accuracy. The polypeptide is Small ribosomal subunit protein uS4 (Xanthomonas axonopodis pv. citri (strain 306)).